A 304-amino-acid chain; its full sequence is Dihydroorotate dehydrogenase B (NAD(+)), catalytic subunit (304 aa).

Residues Ser21 and 45–46 each bind FMN; that span reads KA. Residues Lys45 and 69-73 contribute to the substrate site; that span reads NAIGL. Residues Asn99 and Asn127 each coordinate FMN. Asn127 provides a ligand contact to substrate. Cys130 serves as the catalytic Nucleophile. FMN-binding residues include Lys165 and Ile191. Residue 192–193 participates in substrate binding; that stretch reads NT. FMN is bound by residues Gly217, 243–244, and 265–266; these read GG and GT.

The protein belongs to the dihydroorotate dehydrogenase family. Type 1 subfamily. In terms of assembly, heterotetramer of 2 PyrK and 2 PyrD type B subunits. It depends on FMN as a cofactor.

The protein localises to the cytoplasm. The enzyme catalyses (S)-dihydroorotate + NAD(+) = orotate + NADH + H(+). The protein operates within pyrimidine metabolism; UMP biosynthesis via de novo pathway; orotate from (S)-dihydroorotate (NAD(+) route): step 1/1. In terms of biological role, catalyzes the conversion of dihydroorotate to orotate with NAD(+) as electron acceptor. The polypeptide is Dihydroorotate dehydrogenase B (NAD(+)), catalytic subunit (pyrD) (Listeria innocua serovar 6a (strain ATCC BAA-680 / CLIP 11262)).